The following is a 252-amino-acid chain: Small ribosomal subunit protein eS1B (252 aa).

Residue alanine 2 is modified to N-acetylalanine; partial. Serine 251 bears the Phosphoserine mark.

This sequence belongs to the eukaryotic ribosomal protein eS1 family. As to quaternary structure, component of the small ribosomal subunit (SSU). Mature yeast ribosomes consist of a small (40S) and a large (60S) subunit. The 40S small subunit contains 1 molecule of ribosomal RNA (18S rRNA) and at least 33 different proteins. The large 60S subunit contains 3 rRNA molecules (25S, 5.8S and 5S rRNA) and at least 46 different proteins. eS1 interacts directly with uS11 and eS26, which form part of the mRNA exit tunnel.

The protein localises to the cytoplasm. Its function is as follows. Component of the ribosome, a large ribonucleoprotein complex responsible for the synthesis of proteins in the cell. The small ribosomal subunit (SSU) binds messenger RNAs (mRNAs) and translates the encoded message by selecting cognate aminoacyl-transfer RNA (tRNA) molecules. The large subunit (LSU) contains the ribosomal catalytic site termed the peptidyl transferase center (PTC), which catalyzes the formation of peptide bonds, thereby polymerizing the amino acids delivered by tRNAs into a polypeptide chain. The nascent polypeptides leave the ribosome through a tunnel in the LSU and interact with protein factors that function in enzymatic processing, targeting, and the membrane insertion of nascent chains at the exit of the ribosomal tunnel. In Schizosaccharomyces pombe (strain 972 / ATCC 24843) (Fission yeast), this protein is Small ribosomal subunit protein eS1B (rps102).